The chain runs to 193 residues: MSGPPSAPQGALAAPRSPAVRRKGLQAPSWGSPGRPAAHSPWACGPPHWGPQRGPRNAAAARPGPRSRWHKRCAAACGACARPPGHQLQPPGAGAPQPGVACSYLGPRPQRTPCSAQSRPGWCAGPRRRHAPGTEPHVAPGRAPPPRAGASPGSRLLPGSPSLLLPAATWRTWGQESKVLRKILKAWDPFSLL.

Disordered regions lie at residues 1 to 67 (MSGP…GPRS) and 110 to 160 (QRTP…LPGS). Low complexity-rich tracts occupy residues 50–64 (GPQR…ARPG) and 148–160 (AGAS…LPGS).

This is an uncharacterized protein from Homo sapiens (Human).